A 105-amino-acid chain; its full sequence is Heat shock protein HspQ (105 aa).

The segment at 75–105 (GEAQEAHPEQPSLDELAESIRHQLQAPRLRN) is disordered.

The protein belongs to the HspQ family.

Its subcellular location is the cytoplasm. Functionally, involved in the degradation of certain denaturated proteins, including DnaA, during heat shock stress. The protein is Heat shock protein HspQ of Serratia proteamaculans (strain 568).